A 471-amino-acid polypeptide reads, in one-letter code: E3 SUMO-protein ligase EGR2 (471 aa).

The segment covering 127-143 (PASTTASSNVTSASPNP) has biased composition (low complexity). A disordered region spans residues 127–177 (PASTTASSNVTSASPNPLATGPLGVCTMSQTQPDLDHLYSPPPPPPYSGCA). At Lys246 the chain carries N6-acetyllysine; by EP300. 2 disordered regions span residues 273-301 (GGPS…AAAA) and 313-336 (RPIL…RPYP). Over residues 280 to 289 (TGPGASGGSE) the composition is skewed to gly residues. 3 C2H2-type zinc fingers span residues 335 to 359 (YPCP…IRIH), 365 to 387 (FQCR…IRTH), and 393 to 415 (FACD…TKIH). Residues 406-471 (DERKRHTKIH…GPCSSRTRTP (66 aa)) form a disordered region. Residues 410–420 (RHTKIHLRQKE) are compositionally biased toward basic residues. Low complexity predominate over residues 424-437 (SAPSSSVPAASTAS).

It belongs to the EGR C2H2-type zinc-finger protein family. Interacts with HCFC1. Interacts with WWP2. Interacts with UBC9. Interacts with CITED1. Interacts (via phosphorylated form) with SFN. Ubiquitinated by WWP2 leading to proteasomal degradation. Post-translationally, acetylated at Lys-246. May be deacetylated by HDAC6, HDAC10 or SIRT1.

Its subcellular location is the nucleus. Its pathway is protein modification; protein sumoylation. Functionally, sequence-specific DNA-binding transcription factor. Plays a role in hindbrain segmentation by regulating the expression of a subset of homeobox containing genes and in Schwann cell myelination by regulating the expression of genes involved in the formation and maintenance of myelin. Binds to two EGR2-consensus sites EGR2A (5'-CTGTAGGAG-3') and EGR2B (5'-ATGTAGGTG-3') in the HOXB3 enhancer and promotes HOXB3 transcriptional activation. Binds to specific DNA sites located in the promoter region of HOXA4, HOXB2 and ERBB2. Regulates hindbrain segmentation by controlling the expression of Hox genes, such as HOXA4, HOXB3 and HOXB2, and thereby specifying odd and even rhombomeres. Promotes the expression of HOXB3 in the rhombomere r5 in the hindbrain. Regulates myelination in the peripheral nervous system after birth, possibly by regulating the expression of myelin proteins, such as MPZ, and by promoting the differentiation of Schwann cells. Involved in the development of the jaw openener musculature, probably by playing a role in its innervation through trigeminal motor neurons. May play a role in adipogenesis, possibly by regulating the expression of CEBPB. Its function is as follows. E3 SUMO-protein ligase helping SUMO1 conjugation to its coregulators NAB1 and NAB2, whose sumoylation down-regulates EGR2 transcriptional activity. The protein is E3 SUMO-protein ligase EGR2 (EGR2) of Sus scrofa (Pig).